The primary structure comprises 226 residues: DNA mismatch repair protein MutH (226 aa).

The protein belongs to the MutH family.

It is found in the cytoplasm. Its function is as follows. Sequence-specific endonuclease that cleaves unmethylated GATC sequences. It is involved in DNA mismatch repair. The protein is DNA mismatch repair protein MutH of Actinobacillus pleuropneumoniae serotype 5b (strain L20).